A 540-amino-acid chain; its full sequence is MKGKLLVIGFGPGSFEHITQRAREAIQESDMIIGYKTYVELIQGLLTNQQIISTGMTEEVSRAQEAVKQAEAGKTVAVISSGDAGVYGMAGLVYEVLIEKGWKKETGVELEVIPGISAINSCASLLGAPVMHDACTISLSDHLTPWELIEKRIEAAAQADFVVAFYNPKSGRRTRQIVEAQRILLKYRSPDTPVGLVKSAYRDREEVVMTNLKDMLNHEIGMLTTVVVGNSSTFFYDDLMITPRGYQRKYTLNQTEQPLRPHQRLRKEAEPWALDQEEAVKQSASAIEAVQNTREETAASRALAEEALQAILGESTSAVVHQPIESIFEVAVSPGLANKKFTPVQMTTLAEVVGEKGTMEYTPDHQIKLQIPTAHPDMIIEKLQAASFLLSPVGDVFTIKACDFCDGEKSDAIPHTEELQKRLGGMDMPKELKLGINGCGMACYGAVQEDIGIVYRKGAFDLFLGAKTVGRNAHSGQIVAEGIAPDDIVEIVENIIHEYKEKGHPNERFHKFFKRVKNVYGFDYQDITPKIKVEPAPCGD.

4 residues coordinate [4Fe-4S] cluster: Cys402, Cys405, Cys439, and Cys443.

This sequence in the N-terminal section; belongs to the precorrin methyltransferase family. [4Fe-4S] cluster is required as a cofactor.

It carries out the reaction Co(II)-factor III + AH2 + S-adenosyl-L-methionine = Co-precorrin-4 + A + S-adenosyl-L-homocysteine. The protein operates within cofactor biosynthesis; adenosylcobalamin biosynthesis. Methyltransferase that catalyzes the reduction, ring contraction and methylation of C-17 in cobalt-factor III to form cobalt-precorrin-4. Is also able to convert cobalt-precorrin-3 to cobalt-precorrin-4. This is Cobalt-factor III methyltransferase (cbiH60) from Priestia megaterium (Bacillus megaterium).